Consider the following 86-residue polypeptide: Large ribosomal subunit protein bL31B (86 aa).

This sequence belongs to the bacterial ribosomal protein bL31 family. Type B subfamily. In terms of assembly, part of the 50S ribosomal subunit.

This Vibrio vulnificus (strain YJ016) protein is Large ribosomal subunit protein bL31B.